The primary structure comprises 700 residues: MLSKYQPSAHIAVTRAHWEDLHQAISSGKVTIDGNSLTLADVVAVSKFGCYARLSENRETIDAINESVSTLQECLDEGHHIYGVNTGFGGSADSRTDHLASLQRALLQLLQSGILTKADIGSGDTPSQSHAMPPEWVKAIMVVRSNSVARGHSAVSIGSIEAILRLLQRDITPVVPLRGTISASGDLMPLAYIVGAIEGNPGVFARAGKSPHGQALPAQQVLEQLGIPRITLGPKEALGLVNGTAASAALSSLVLYEAHRLALLSQVTTALTVEALRGSAESFHPFISQARPHDGQMEAASNILTVMRGSRLAMGTSEVQTGLVQDRYSLRTASQWIGPQLEDLLLADRQITVELNSTTDNPLIDSVSRHFYCGGNFQATSVTSAMEKTRLALQMLGKLMFAQCSEMIDPSLNNGLPTNLVADDPSLSFTMKGVDISMAAYMSELAYLANPVSSHVQTAEMHNQAVNSLAFVSARYTMQAVDIVSMMSACSLYVACQALDLRVLQLNFFRELHPIVCNGTHDAFHTILAPKELERITQQLVTAIQDAWLTTSRMDAGDRCQRVIKLSLPILLNEMRGAIPSDRQQVDLLTSIGNWEEATCYKMLEAYKQTHERFCRTQNTVEYLGAGSKAIYHAIRHKVGVPFHQGFVEQPSADDLDTTAIINGREKKTTGGWISLIYEALRDDSLTGVILEAVQPVRSI.

Tyr82 acts as the Proton donor/acceptor in catalysis. Positions 183-185 (ASG) form a cross-link, 5-imidazolinone (Ala-Gly). Position 184 is a 2,3-didehydroalanine (Ser) (Ser184). (E)-cinnamate contacts are provided by Asn242, Gln325, Arg331, Asn361, Lys432, Glu460, and Asn463.

This sequence belongs to the PAL/histidase family. Contains an active site 4-methylidene-imidazol-5-one (MIO), which is formed autocatalytically by cyclization and dehydration of residues Ala-Ser-Gly.

The catalysed reaction is L-phenylalanine = (E)-cinnamate + NH4(+). The protein operates within secondary metabolite biosynthesis. In terms of biological role, phenylalanine ammonia-lyase; part of the gene cluster that mediates the biosynthesis of hancockiamides, an unusual new family of N-cinnamoylated piperazines. The NRPS hkm10 and the NmrA-like reductase hkm9 are proposed to convert two molecules of L-Phe to the intermediary piperazine called xenocockiamide A. Xenocockiamide A is then converted to hancockiamide D via a series of hydroxylations and O-methylations. The tyrosinase hkm6 may catalyze an aromatic hydroxylation, then the 2-oxoglutarate-dependent Fe(II) dioxygenase hkm4 and the FAD-dependent phenol hydroxylase hkm7 may catalyze consecutive hydroxylations to install 2 more hydroxy groups, and the methyltransferase hkm8 probably catalyzes two methylations using 2 molecules of S-adenosyl-L-methionine (SAM). The NRPS hkm11 activates and transfers trans-cinnamate supplied by the PAL hkm12 to hancockiamide D and produces hancockiamide A. NRPS Hkm11 has the flexibility to tolerate the bulky hancockiamide G as a substrate and the absence of the acetyl-transferase hkm3 opens up the opportunity for hkm11 to introduce a second N-cinnamoyl moiety. The cytochrome P450 monooxygenase hkm5 catalyzes the methylenedioxy bridge formation, converting hancockiamide A into hancockiamide G. Hkm5 can also convert hancockiamide B into hancockiamide C, and hancockiamide D into hancockiamide H. The N-acetyltransferase hkm3 finally transfers an acetyl group to 1-N of piperazine, converting hancockiamide A into hancockiamide B and hancockiamide G into hancockiamide C. The polypeptide is Phenylalanine ammonia-lyase hkm12 (Aspergillus hancockii).